The chain runs to 145 residues: Mitochondrial import receptor subunit TOM20 homolog (145 aa).

Over 1–6 the chain is Mitochondrial intermembrane; that stretch reads MVGRNS. Residues 7–24 form a helical membrane-spanning segment; the sequence is AIAAGVCGALFIGYCIYF. Over 25 to 145 the chain is Cytoplasmic; sequence DRKRRSDPNF…AQSLAEDDVE (121 aa). Residues lysine 35, lysine 56, lysine 61, and lysine 68 each participate in a glycyl lysine isopeptide (Lys-Gly) (interchain with G-Cter in ubiquitin) cross-link. A phosphoserine mark is found at serine 135 and serine 138.

This sequence belongs to the Tom20 family. Forms part of the preprotein translocase complex of the outer mitochondrial membrane (TOM complex) which consists of at least 7 different proteins (TOMM5, TOMM6, TOMM7, TOMM20, TOMM22, TOMM40 and TOMM70). Interacts with TOM22. Interacts with APEX1. Interacts with TBC1D21. Upon mitochondrial depolarization, interacts with PINK1; the interaction is required for PINK1-TOM-TIM23 supercomplex formation which is critical for PINK1 stabilization at the outer mitochondrial membrane, kinase activation and downstream mitophagy. In terms of processing, ubiquitinated by PRKN during mitophagy, leading to its degradation and enhancement of mitophagy. Deubiquitinated by USP30.

The protein localises to the mitochondrion outer membrane. Its function is as follows. Central component of the receptor complex responsible for the recognition and translocation of cytosolically synthesized mitochondrial preproteins. Together with TOM22 functions as the transit peptide receptor at the surface of the mitochondrion outer membrane and facilitates the movement of preproteins into the TOM40 translocation pore. Required for the translocation across the mitochondrial outer membrane of cytochrome P450 monooxygenases. The sequence is that of Mitochondrial import receptor subunit TOM20 homolog (TOMM20) from Bos taurus (Bovine).